The following is a 309-amino-acid chain: Mitochondrial import receptor subunit TOM34 (309 aa).

TPR repeat units follow at residues 9 to 42 (VEEL…LQAQ), 51 to 84 (SVLY…VPFS), and 86 to 118 (KPLL…DDSV). Serine 160 is subject to Phosphoserine. Residues 161–189 (LPSENHKEMAKSKSKETTATKNRVPSAGD) are disordered. A compositionally biased stretch (basic and acidic residues) spans 164–178 (ENHKEMAKSKSKETT). The residue at position 186 (serine 186) is a Phosphoserine. TPR repeat units lie at residues 193–226 (AKVL…SNLE), 227–260 (SATY…DGKN), and 262–294 (KAFY…EPRN). Residue lysine 197 forms a Glycyl lysine isopeptide (Lys-Gly) (interchain with G-Cter in SUMO2) linkage.

It belongs to the Tom34 family. In terms of assembly, interacts with HSP90A, VCP, ATP6V1D, KIAA0665, AMPK, and DMAP1 through its TPR repeat.

Its subcellular location is the cytoplasm. It is found in the mitochondrion outer membrane. Functionally, plays a role in the import of cytosolically synthesized preproteins into mitochondria. Binds the mature portion of precursor proteins. Interacts with cellular components, and possesses weak ATPase activity. May be a chaperone-like protein that helps to keep newly synthesized precursors in an unfolded import compatible state. This is Mitochondrial import receptor subunit TOM34 (TOMM34) from Pongo abelii (Sumatran orangutan).